The following is a 670-amino-acid chain: tRNA 5-methylaminomethyl-2-thiouridine biosynthesis bifunctional protein MnmC (670 aa).

Residues 1–242 are tRNA (mnm(5)s(2)U34)-methyltransferase; the sequence is MTFSVQHAEI…KRECLSGLKI (242 aa). The tract at residues 269–670 is FAD-dependent cmnm(5)s(2)U34 oxidoreductase; sequence IGGGIASLCA…KKWLKGSKVE (402 aa).

In the N-terminal section; belongs to the methyltransferase superfamily. tRNA (mnm(5)s(2)U34)-methyltransferase family. This sequence in the C-terminal section; belongs to the DAO family. Requires FAD as cofactor.

The protein resides in the cytoplasm. It carries out the reaction 5-aminomethyl-2-thiouridine(34) in tRNA + S-adenosyl-L-methionine = 5-methylaminomethyl-2-thiouridine(34) in tRNA + S-adenosyl-L-homocysteine + H(+). Catalyzes the last two steps in the biosynthesis of 5-methylaminomethyl-2-thiouridine (mnm(5)s(2)U) at the wobble position (U34) in tRNA. Catalyzes the FAD-dependent demodification of cmnm(5)s(2)U34 to nm(5)s(2)U34, followed by the transfer of a methyl group from S-adenosyl-L-methionine to nm(5)s(2)U34, to form mnm(5)s(2)U34. The chain is tRNA 5-methylaminomethyl-2-thiouridine biosynthesis bifunctional protein MnmC from Haemophilus influenzae (strain PittGG).